The sequence spans 217 residues: 3,4-dihydroxy-2-butanone 4-phosphate synthase (217 aa).

D-ribulose 5-phosphate-binding positions include 37-38 (RE), Asp42, 150-154 (RRGHT), and Glu174. Glu38 contributes to the Mg(2+) binding site. His153 is a binding site for Mg(2+).

The protein belongs to the DHBP synthase family. As to quaternary structure, homodimer. Mg(2+) is required as a cofactor. It depends on Mn(2+) as a cofactor.

The catalysed reaction is D-ribulose 5-phosphate = (2S)-2-hydroxy-3-oxobutyl phosphate + formate + H(+). It functions in the pathway cofactor biosynthesis; riboflavin biosynthesis; 2-hydroxy-3-oxobutyl phosphate from D-ribulose 5-phosphate: step 1/1. Its function is as follows. Catalyzes the conversion of D-ribulose 5-phosphate to formate and 3,4-dihydroxy-2-butanone 4-phosphate. This chain is 3,4-dihydroxy-2-butanone 4-phosphate synthase, found in Serratia proteamaculans (strain 568).